Here is a 499-residue protein sequence, read N- to C-terminus: Taxadiene 5-alpha hydroxylase (499 aa).

The helical; Signal-anchor transmembrane segment at 22–42 threads the bilayer; that stretch reads TESFSIALSAIAGILLLLLLF. Residue Cys445 coordinates heme.

This sequence belongs to the cytochrome P450 family. Requires heme as cofactor.

The protein localises to the membrane. The catalysed reaction is taxa-4(5),11(12)-diene + reduced [NADPH--hemoprotein reductase] + O2 = taxa-4(20),11-dien-5alpha-ol + oxidized [NADPH--hemoprotein reductase] + H2O + H(+). It participates in alkaloid biosynthesis; taxol biosynthesis; taxa-4(20),11-dien-5alpha-ol from geranylgeranyl diphosphate: step 2/2. Catalyzes the first oxygenation step of taxol biosynthesis. Can use both taxa-4(5),11(12)-diene and taxa-4(20),11(12)-diene as substrate. This chain is Taxadiene 5-alpha hydroxylase, found in Taxus cuspidata (Japanese yew).